The following is a 210-amino-acid chain: Cdc42 effector protein 2 (210 aa).

Serine 2 carries the post-translational modification N-acetylserine. A CRIB domain is found at isoleucine 30–glycine 44. Serine 31, serine 101, and serine 141 each carry phosphoserine. The tract at residues proline 122–glutamate 171 is disordered.

The protein belongs to the BORG/CEP family. As to quaternary structure, interacts with RHOQ and CDC42 in a GTP-dependent manner, and with SEPT7. As to expression, highly expressed in the heart. Weakly expressed in the pancreas and liver.

Its subcellular location is the endomembrane system. The protein localises to the cytoplasm. It localises to the cytoskeleton. Probably involved in the organization of the actin cytoskeleton. May act downstream of CDC42 to induce actin filament assembly leading to cell shape changes. Induces pseudopodia formation in fibroblasts in a CDC42-dependent manner. The chain is Cdc42 effector protein 2 (CDC42EP2) from Homo sapiens (Human).